We begin with the raw amino-acid sequence, 173 residues long: Protein GrpE (173 aa).

Residues 1–20 show a composition bias toward basic and acidic residues; that stretch reads MQDEFKTDTPRTEAGSEKET. The disordered stretch occupies residues 1–23; sequence MQDEFKTDTPRTEAGSEKETMPS.

It belongs to the GrpE family. In terms of assembly, homodimer.

Its subcellular location is the cytoplasm. In terms of biological role, participates actively in the response to hyperosmotic and heat shock by preventing the aggregation of stress-denatured proteins, in association with DnaK and GrpE. It is the nucleotide exchange factor for DnaK and may function as a thermosensor. Unfolded proteins bind initially to DnaJ; upon interaction with the DnaJ-bound protein, DnaK hydrolyzes its bound ATP, resulting in the formation of a stable complex. GrpE releases ADP from DnaK; ATP binding to DnaK triggers the release of the substrate protein, thus completing the reaction cycle. Several rounds of ATP-dependent interactions between DnaJ, DnaK and GrpE are required for fully efficient folding. This Thiobacillus denitrificans (strain ATCC 25259 / T1) protein is Protein GrpE.